Here is a 433-residue protein sequence, read N- to C-terminus: tRNA-2-methylthio-N(6)-dimethylallyladenosine synthase (433 aa).

The region spanning 4–119 (KKLFIQTLGC…ITQAIKTPKF (116 aa)) is the MTTase N-terminal domain. Positions 13, 50, 82, 151, 155, and 158 each coordinate [4Fe-4S] cluster. A Radical SAM core domain is found at 137–370 (RNSIYKSYIN…QNRHSEILDK (234 aa)). One can recognise a TRAM domain in the interval 373–433 (KKQENKTFKV…KRMVLYGEIV (61 aa)).

The protein belongs to the methylthiotransferase family. MiaB subfamily. Monomer. The cofactor is [4Fe-4S] cluster.

The protein localises to the cytoplasm. It catalyses the reaction N(6)-dimethylallyladenosine(37) in tRNA + (sulfur carrier)-SH + AH2 + 2 S-adenosyl-L-methionine = 2-methylsulfanyl-N(6)-dimethylallyladenosine(37) in tRNA + (sulfur carrier)-H + 5'-deoxyadenosine + L-methionine + A + S-adenosyl-L-homocysteine + 2 H(+). Catalyzes the methylthiolation of N6-(dimethylallyl)adenosine (i(6)A), leading to the formation of 2-methylthio-N6-(dimethylallyl)adenosine (ms(2)i(6)A) at position 37 in tRNAs that read codons beginning with uridine. The sequence is that of tRNA-2-methylthio-N(6)-dimethylallyladenosine synthase from Campylobacter jejuni subsp. jejuni serotype O:2 (strain ATCC 700819 / NCTC 11168).